Consider the following 121-residue polypeptide: MPPKSGKGQKKAGKAKGAPRSDKKRRRKRKESYGIYIYKVMKQVHPDTGISSRAMSIMNSFVNDIFERIAAEASRLAHYNKKSTITSREVQTAVRLLLPGELAKHAVSEGTKAVTKYTTSK.

Residues 1-30 (MPPKSGKGQKKAGKAKGAPRSDKKRRRKRK) are disordered. Position 2 is a n,N-dimethylproline (Pro2). Residue Ser108 is glycosylated (O-linked (GlcNAc) serine). Lys116 participates in a covalent cross-link: Glycyl lysine isopeptide (Lys-Gly) (interchain with G-Cter in ubiquitin).

This sequence belongs to the histone H2B family. As to quaternary structure, the nucleosome is a histone octamer containing two molecules each of H2A, H2B, H3 and H4 assembled in one H3-H4 heterotetramer and two H2A-H2B heterodimers. The octamer wraps approximately 147 bp of DNA. Post-translationally, monoubiquitination of Lys-116 gives a specific tag for epigenetic transcriptional activation and is also prerequisite for histone H3 'Lys-4' and 'Lys-79' methylation. In terms of processing, glcNAcylation at Ser-108 promotes monoubiquitination of Lys-116. It fluctuates in response to extracellular glucose, and associates with transcribed genes.

The protein localises to the nucleus. It is found in the chromosome. Functionally, core component of nucleosome. Nucleosomes wrap and compact DNA into chromatin, limiting DNA accessibility to the cellular machineries which require DNA as a template. Histones thereby play a central role in transcription regulation, DNA repair, DNA replication and chromosomal stability. DNA accessibility is regulated via a complex set of post-translational modifications of histones, also called histone code, and nucleosome remodeling. The polypeptide is Histone H2B, sperm (Marthasterias glacialis (Spiny starfish)).